Here is a 164-residue protein sequence, read N- to C-terminus: Large ribosomal subunit protein eL24z (164 aa).

Over residues 117 to 133 (ERIKKTKDEKKAKKVEY) the composition is skewed to basic and acidic residues. The segment at 117 to 164 (ERIKKTKDEKKAKKVEYASKQQKSQVKGNIPKSAAPKAAKMGGGGGRR) is disordered.

This sequence belongs to the eukaryotic ribosomal protein eL24 family. In terms of assembly, interacts with the cauliflower mosaic virus transactivator TAV to form a TAV/60S complex. Interacts with REIL1 AND REIL2.

Functionally, might have an extraribosomal function in reinitiation of translation. In Arabidopsis thaliana (Mouse-ear cress), this protein is Large ribosomal subunit protein eL24z (RPL24A).